A 206-amino-acid chain; its full sequence is Probable N-acetyltransferase 14 (206 aa).

In terms of domain architecture, N-acetyltransferase spans 55-206 (LRFVLASFAL…TLVREFSKDL (152 aa)). The helical transmembrane segment at 57–77 (FVLASFALALLLPVFLAVTAV) threads the bilayer.

It belongs to the camello family.

The protein localises to the membrane. In terms of biological role, probable acetyltransferase. Its function is as follows. May act as a transcription factor regulating the expression of coproporphyrinogen oxidase by binding to a promoter regulatory element. This is Probable N-acetyltransferase 14 (NAT14) from Macaca fascicularis (Crab-eating macaque).